We begin with the raw amino-acid sequence, 282 residues long: NADPH-dependent 7-cyano-7-deazaguanine reductase (282 aa).

88 to 90 contacts substrate; that stretch reads IES. Residue 90–91 participates in NADPH binding; sequence SK. Residue Cys-190 is the Thioimide intermediate of the active site. The active-site Proton donor is Asp-197. 229-230 is a substrate binding site; sequence HE. 258–259 is an NADPH binding site; sequence RG.

It belongs to the GTP cyclohydrolase I family. QueF type 2 subfamily. Homodimer.

It is found in the cytoplasm. It carries out the reaction 7-aminomethyl-7-carbaguanine + 2 NADP(+) = 7-cyano-7-deazaguanine + 2 NADPH + 3 H(+). The protein operates within tRNA modification; tRNA-queuosine biosynthesis. Catalyzes the NADPH-dependent reduction of 7-cyano-7-deazaguanine (preQ0) to 7-aminomethyl-7-deazaguanine (preQ1). The protein is NADPH-dependent 7-cyano-7-deazaguanine reductase of Escherichia coli O17:K52:H18 (strain UMN026 / ExPEC).